An 85-amino-acid chain; its full sequence is Beta-insect depressant toxin Lqh-dprIT3b (85 aa).

Residues 1–21 form the signal peptide; sequence MKLLLLLTISASMLIEGLVNA. One can recognise an LCN-type CS-alpha/beta domain in the interval 22-82; the sequence is DGYIRGGDGC…EWDYETNTCG (61 aa). Disulfide bonds link C31/C81, C35/C56, C42/C63, and C46/C65. G82 bears the Glycine amide mark.

It belongs to the long (4 C-C) scorpion toxin superfamily. Sodium channel inhibitor family. Beta subfamily. In terms of tissue distribution, expressed by the venom gland.

The protein resides in the secreted. Depressant insect beta-toxins cause a transient contraction paralysis followed by a slow flaccid paralysis. They bind voltage-independently at site-4 of sodium channels (Nav) and block action potentials, primarily by depolarizing the axonal membrane and suppressing the sodium current. This depressant toxin is active only on insects. It is found in a relatively small amount in the venom, and its activity on insects is 10-fold higher compared to other known depressant toxins. In Leiurus hebraeus (Hebrew deathstalker scorpion), this protein is Beta-insect depressant toxin Lqh-dprIT3b.